Here is a 311-residue protein sequence, read N- to C-terminus: UDP-N-acetylenolpyruvoylglucosamine reductase (311 aa).

An FAD-binding PCMH-type domain is found at 28 to 197 (KIGGNARWLV…VSARFHLARG (170 aa)). Arg-177 is a catalytic residue. Catalysis depends on Ser-226, which acts as the Proton donor. Glu-296 is a catalytic residue.

It belongs to the MurB family. FAD is required as a cofactor.

It localises to the cytoplasm. It catalyses the reaction UDP-N-acetyl-alpha-D-muramate + NADP(+) = UDP-N-acetyl-3-O-(1-carboxyvinyl)-alpha-D-glucosamine + NADPH + H(+). The protein operates within cell wall biogenesis; peptidoglycan biosynthesis. Its function is as follows. Cell wall formation. In Magnetococcus marinus (strain ATCC BAA-1437 / JCM 17883 / MC-1), this protein is UDP-N-acetylenolpyruvoylglucosamine reductase.